The sequence spans 416 residues: MFSKSVTLAQYDPDLAAAIAQEDQRQQDHVELIASENYVSCAVMDAQGSQLTNKYAEGYPGKRYYGGCEYVDIVEQLAIDRVKKLFGAQYANVQPHSGSQANQAVYASVLKPGDTILGMSLAHGGHLTHGASVNISGKLYNAVTYGLDENEVLDYAEVERLALEHKPKMIVAGASAYALQIDWAKFREIADKVGAYLFVDMAHYAGLVAGGEYPNPVPFCDFVTTTTHKTLRGPRGGVILCRDNTHEKALNSSIFPSLQGGPLMHVIAAKAVAFKEALQPEFKQYAKQVKINAAAMAEELVKRGLRIVSGRTESHVFLVDLQPMKITGKAAEAALGKAHITVNKNAIPNDPEKPFVTSGIRIGSAAMTTRGFNEADVRVLANLVADVLSNPEDEANLAKVREQVTALCNKYPVYGA.

(6S)-5,6,7,8-tetrahydrofolate-binding positions include Leu-121 and Gly-125–Leu-127. Lys-229 is modified (N6-(pyridoxal phosphate)lysine).

Belongs to the SHMT family. As to quaternary structure, homodimer. Pyridoxal 5'-phosphate serves as cofactor.

It is found in the cytoplasm. The enzyme catalyses (6R)-5,10-methylene-5,6,7,8-tetrahydrofolate + glycine + H2O = (6S)-5,6,7,8-tetrahydrofolate + L-serine. It participates in one-carbon metabolism; tetrahydrofolate interconversion. It functions in the pathway amino-acid biosynthesis; glycine biosynthesis; glycine from L-serine: step 1/1. Its function is as follows. Catalyzes the reversible interconversion of serine and glycine with tetrahydrofolate (THF) serving as the one-carbon carrier. This reaction serves as the major source of one-carbon groups required for the biosynthesis of purines, thymidylate, methionine, and other important biomolecules. Also exhibits THF-independent aldolase activity toward beta-hydroxyamino acids, producing glycine and aldehydes, via a retro-aldol mechanism. The chain is Serine hydroxymethyltransferase from Neisseria meningitidis serogroup C (strain 053442).